A 318-amino-acid chain; its full sequence is Retinol dehydrogenase 5 (318 aa).

A helical membrane pass occupies residues 1–21 (MWLPLLLGALLWAVLWLLRDR). At 22–288 (QSLPASNAFV…TRYSPGWDAK (267 aa)) the chain is on the lumenal side. 32-56 (FITGCDSGFGRLLALQLDQRGFRVL) provides a ligand contact to NADP(+). A glycan (N-linked (GlcNAc...) asparagine) is linked at Asn-160. Ser-163 serves as a coordination point for substrate. Catalysis depends on Tyr-175, which acts as the Proton acceptor. A helical membrane pass occupies residues 289–309 (LLWLPASYLPASLVDAVLTWV). Topologically, residues 310-318 (LPKPAQAVY) are cytoplasmic.

It belongs to the short-chain dehydrogenases/reductases (SDR) family. Homodimer. Widely expressed. In the eye, abundant in the retinal pigment epithelium.

It localises to the endoplasmic reticulum membrane. It catalyses the reaction 11-cis-retinol + NAD(+) = 11-cis-retinal + NADH + H(+). The enzyme catalyses 9-cis-retinol + NAD(+) = 9-cis-retinal + NADH + H(+). It carries out the reaction 13-cis-retinol + NAD(+) = 13-cis-retinal + NADH + H(+). The catalysed reaction is androsterone + NAD(+) = 5alpha-androstan-3,17-dione + NADH + H(+). It catalyses the reaction 5alpha-androstane-3alpha,17beta-diol + NAD(+) = 17beta-hydroxy-5alpha-androstan-3-one + NADH + H(+). The protein operates within cofactor metabolism; retinol metabolism. Its activity is regulated as follows. Inhibited by 9-cis-, 13-cis- and all-trans-retinoic acids, with the most potent inhibitor being 13-cis-retinoic acid. Weakly inhibited by oleic acid. Functionally, catalyzes the oxidation of cis-isomers of retinol, including 11-cis-, 9-cis-, and 13-cis-retinol in an NAD-dependent manner. Has no activity towards all-trans retinal. Plays a significant role in 11-cis retinol oxidation in the retinal pigment epithelium cells (RPE). Also recognizes steroids (androsterone, androstanediol) as its substrates. The protein is Retinol dehydrogenase 5 of Homo sapiens (Human).